The following is a 195-amino-acid chain: Rubrerythrin-1 (195 aa).

Residues 3-150 (SLKGTKTAEN…ALLKNIEENK (148 aa)) form the Ferritin-like diiron domain. Positions 20, 53, 98, 101, 132, 135, 162, 165, 178, and 181 each coordinate Fe(3+). The Rubredoxin-like domain occupies 157-191 (VKFWKCIKCGYIFEGKTAPKVCPACLHPQAYFEIL).

Homodimer. Requires Fe(3+) as cofactor.

It catalyses the reaction H2O2 + NADH + H(+) = NAD(+) + 2 H2O. Rubredoxin (Rd) increases the NADH consumption rate by serving as an intermediary electron-transfer shuttle between NROR and RubY. In terms of biological role, functions as the terminal component of an NADH peroxidase (NADH:H(2)O(2) oxidoreductase) when using NADH:rubredoxin oxidoreductase (NROR) as the electron transport intermediary from NADH to RubY. The sequence is that of Rubrerythrin-1 (rbr1) from Clostridium acetobutylicum (strain ATCC 824 / DSM 792 / JCM 1419 / IAM 19013 / LMG 5710 / NBRC 13948 / NRRL B-527 / VKM B-1787 / 2291 / W).